The primary structure comprises 201 residues: Retinol-binding protein 4 (201 aa).

The N-terminal stretch at 1–18 (MEWVWALVLLAALGSGRG) is a signal peptide. Cystine bridges form between Cys-22-Cys-178, Cys-88-Cys-192, and Cys-138-Cys-147. Substrate is bound at residue Gln-116. The residue at position 139 (Arg-139) is an Omega-N-methylarginine.

This sequence belongs to the calycin superfamily. Lipocalin family. In terms of assembly, interacts with TTR. Interaction with TTR prevents its loss by filtration through the kidney glomeruli. Interacts with STRA6.

Its subcellular location is the secreted. Retinol-binding protein that mediates retinol transport in blood plasma. Delivers retinol from the liver stores to the peripheral tissues. Transfers the bound all-trans retinol to STRA6, that then facilitates retinol transport across the cell membrane. This chain is Retinol-binding protein 4 (RBP4), found in Oryctolagus cuniculus (Rabbit).